The chain runs to 526 residues: Aspartate ammonia-lyase (526 aa).

Positions 1–44 (MSKTSNKSSADSKNDAKAEDIVNGENQIATNESQSSDSAAVSER) are disordered. The span at 10–20 (ADSKNDAKAED) shows a compositional bias: basic and acidic residues. Over residues 24–39 (GENQIATNESQSSDSA) the composition is skewed to polar residues. Residues Thr-155, Ser-194, Thr-195, Asn-196, and Thr-241 each coordinate L-aspartate. The interval 371-380 (GSSIMPAKVN) is SS loop. The active-site Proton acceptor is Ser-372. The L-aspartate site is built by Ser-373 and Lys-378.

Belongs to the class-II fumarase/aspartase family. Aspartase subfamily. As to quaternary structure, homotetramer.

The enzyme catalyses L-aspartate = fumarate + NH4(+). In terms of biological role, catalyzes the reversible conversion of L-aspartate to fumarate and ammonia. This Corynebacterium glutamicum (strain ATCC 13032 / DSM 20300 / JCM 1318 / BCRC 11384 / CCUG 27702 / LMG 3730 / NBRC 12168 / NCIMB 10025 / NRRL B-2784 / 534) protein is Aspartate ammonia-lyase.